An 885-amino-acid polypeptide reads, in one-letter code: DNA mismatch repair protein MutS (885 aa).

626 to 633 (GPNMGGKS) lines the ATP pocket.

The protein belongs to the DNA mismatch repair MutS family.

This protein is involved in the repair of mismatches in DNA. It is possible that it carries out the mismatch recognition step. This protein has a weak ATPase activity. In Burkholderia cenocepacia (strain HI2424), this protein is DNA mismatch repair protein MutS.